The following is a 334-amino-acid chain: MASRGNRARSQPVDNTISYVQCDGLAAMKMVKHCHEESLNNMEVAQGALLGLVVDDRLEITNCFPFPKSDETIDEEEYQLNMMRRLRHVNVDHFHVGWYQSADVGNFLSSTLLESQYHYQTSIEESVVVIYDTQKSARGFLTLKAYRLTPQAIAMYKERDFTPEALRNLKVGYENLFIEIPIVIKNSALCNIMMSELTELVPEEEGTHFLDLGTASVLENHLRCMMDRVDELNHEATKFNKYQQAAIRQEQEKHRMLAKHAQENAARIAKGEQAVPEEEVNKLFRPIPVPTRLNPMIVSGQINTYAQHISQFCSQSLAKLYMTQALQNAKDNKQ.

Residues 20–152 (VQCDGLAAMK…LKAYRLTPQA (133 aa)) form the MPN domain.

The protein belongs to the eIF-3 subunit H family. As to quaternary structure, component of the eukaryotic translation initiation factor 3 (eIF-3) complex.

The protein localises to the cytoplasm. Its function is as follows. Component of the eukaryotic translation initiation factor 3 (eIF-3) complex, which is involved in protein synthesis of a specialized repertoire of mRNAs and, together with other initiation factors, stimulates binding of mRNA and methionyl-tRNAi to the 40S ribosome. The eIF-3 complex specifically targets and initiates translation of a subset of mRNAs involved in cell proliferation. This Anopheles gambiae (African malaria mosquito) protein is Eukaryotic translation initiation factor 3 subunit H.